Here is a 436-residue protein sequence, read N- to C-terminus: UDP-N-acetylmuramate--L-alanine ligase (436 aa).

108 to 114 (GAHGKTS) lines the ATP pocket.

It belongs to the MurCDEF family.

It localises to the cytoplasm. The enzyme catalyses UDP-N-acetyl-alpha-D-muramate + L-alanine + ATP = UDP-N-acetyl-alpha-D-muramoyl-L-alanine + ADP + phosphate + H(+). Its pathway is cell wall biogenesis; peptidoglycan biosynthesis. In terms of biological role, cell wall formation. This Bacillus cereus (strain AH187) protein is UDP-N-acetylmuramate--L-alanine ligase.